The chain runs to 101 residues: DNA-binding protein Fis (101 aa).

Residues Q77–K96 constitute a DNA-binding region (H-T-H motif).

The protein belongs to the transcriptional regulatory Fis family. Homodimer.

Functionally, activates ribosomal RNA transcription. Plays a direct role in upstream activation of rRNA promoters. The polypeptide is DNA-binding protein Fis (Shewanella pealeana (strain ATCC 700345 / ANG-SQ1)).